A 233-amino-acid polypeptide reads, in one-letter code: Large ribosomal subunit protein uL1 (233 aa).

This sequence belongs to the universal ribosomal protein uL1 family. As to quaternary structure, part of the 50S ribosomal subunit.

Binds directly to 23S rRNA. The L1 stalk is quite mobile in the ribosome, and is involved in E site tRNA release. In terms of biological role, protein L1 is also a translational repressor protein, it controls the translation of the L11 operon by binding to its mRNA. This is Large ribosomal subunit protein uL1 from Shewanella putrefaciens (strain CN-32 / ATCC BAA-453).